We begin with the raw amino-acid sequence, 140 residues long: Non-specific lipid transfer protein GPI-anchored 33 (140 aa).

The signal sequence occupies residues 1–27 (MAYTNKVTISAAVATMMLFLAVTIVDA). Cystine bridges form between C40/C80, C52/C64, C65/C104, and C78/C112. Residue N91 is glycosylated (N-linked (GlcNAc...) asparagine). G115 is lipidated: GPI-anchor amidated glycine. Residues 116–140 (DASGGSTNKIAASMVLLGLVASLFF) constitute a propeptide, removed in mature form.

Belongs to the plant LTP family.

The protein resides in the cell membrane. In terms of biological role, probable lipid transfer protein. This chain is Non-specific lipid transfer protein GPI-anchored 33, found in Arabidopsis thaliana (Mouse-ear cress).